Reading from the N-terminus, the 297-residue chain is Phosphatidylserine decarboxylase proenzyme (297 aa).

Residues D100, H157, and S263 each act as charge relay system; for autoendoproteolytic cleavage activity in the active site. S263 acts as the Schiff-base intermediate with substrate; via pyruvic acid; for decarboxylase activity in catalysis. Position 263 is a pyruvic acid (Ser); by autocatalysis (S263).

This sequence belongs to the phosphatidylserine decarboxylase family. PSD-B subfamily. Prokaryotic type I sub-subfamily. Heterodimer of a large membrane-associated beta subunit and a small pyruvoyl-containing alpha subunit. Requires pyruvate as cofactor. In terms of processing, is synthesized initially as an inactive proenzyme. Formation of the active enzyme involves a self-maturation process in which the active site pyruvoyl group is generated from an internal serine residue via an autocatalytic post-translational modification. Two non-identical subunits are generated from the proenzyme in this reaction, and the pyruvate is formed at the N-terminus of the alpha chain, which is derived from the carboxyl end of the proenzyme. The autoendoproteolytic cleavage occurs by a canonical serine protease mechanism, in which the side chain hydroxyl group of the serine supplies its oxygen atom to form the C-terminus of the beta chain, while the remainder of the serine residue undergoes an oxidative deamination to produce ammonia and the pyruvoyl prosthetic group on the alpha chain. During this reaction, the Ser that is part of the protease active site of the proenzyme becomes the pyruvoyl prosthetic group, which constitutes an essential element of the active site of the mature decarboxylase.

It is found in the cell membrane. The enzyme catalyses a 1,2-diacyl-sn-glycero-3-phospho-L-serine + H(+) = a 1,2-diacyl-sn-glycero-3-phosphoethanolamine + CO2. The protein operates within phospholipid metabolism; phosphatidylethanolamine biosynthesis; phosphatidylethanolamine from CDP-diacylglycerol: step 2/2. In terms of biological role, catalyzes the formation of phosphatidylethanolamine (PtdEtn) from phosphatidylserine (PtdSer). The chain is Phosphatidylserine decarboxylase proenzyme from Haemophilus ducreyi (strain 35000HP / ATCC 700724).